The following is a 491-amino-acid chain: Katanin p60 ATPase-containing subunit A1 (491 aa).

The segment at methionine 1–tyrosine 29 is interaction with KATNB1. Residues methionine 1–serine 75 are interaction with dynein and NDEL1. An interaction with microtubules; sufficient for microtubule severing activity region spans residues methionine 1–threonine 185. Serine 42 carries the post-translational modification Phosphoserine; by DYRK2. Residues proline 101–phenylalanine 182 form a disordered region. The span at histidine 145–lysine 169 shows a compositional bias: basic and acidic residues. Glycine 249–threonine 256 is a binding site for ATP.

Belongs to the AAA ATPase family. Katanin p60 subunit A1 subfamily. As to quaternary structure, can homooligomerize into hexameric rings, which may be promoted by interaction with microtubules. Interacts with KATNB1, which may serve as a targeting subunit. Interacts with ASPM; the katanin complex formation KATNA1:KATNB1 is required for the association of ASPM. Interacts with dynein and NDEL1. Associates with the E3 ligase complex containing DYRK2, EDD/UBR5, DDB1 and DCAF1 proteins (EDVP complex). Interacts with KLHL42 (via the kelch domains). Interacts with CUL3; the interaction is enhanced by KLHL42. Interacts with KATNB1 and KATNBL1. Interacts with CAMSAP2 and CAMSAP3; leading to regulate the length of CAMSAP-decorated microtubule stretches. Post-translationally, phosphorylation by DYRK2 triggers ubiquitination and subsequent degradation. In terms of processing, ubiquitinated by the BCR(KLHL42) E3 ubiquitin ligase complex, leading to its proteasomal degradation. Ubiquitinated by the EDVP E3 ligase complex and subsequently targeted for proteasomal degradation.

It is found in the cytoplasm. It localises to the midbody. The protein resides in the cytoskeleton. Its subcellular location is the microtubule organizing center. The protein localises to the centrosome. It is found in the spindle pole. It localises to the spindle. The catalysed reaction is n ATP + n H2O + a microtubule = n ADP + n phosphate + (n+1) alpha/beta tubulin heterodimers.. ATPase activity is stimulated by microtubules, which promote homooligomerization. ATP-dependent microtubule severing is stimulated by interaction with KATNB1. Catalytic subunit of a complex which severs microtubules in an ATP-dependent manner. Microtubule severing may promote rapid reorganization of cellular microtubule arrays and the release of microtubules from the centrosome following nucleation. Microtubule release from the mitotic spindle poles may allow depolymerization of the microtubule end proximal to the spindle pole, leading to poleward microtubule flux and poleward motion of chromosome. The function in regulating microtubule dynamics at spindle poles seems to depend on the association of the katanin KATNA1:KATNB1 complex with ASPM which recruits it to microtubules. Reversely KATNA1:KATNB1 can enhance ASPM blocking activity on microtubule minus-end growth. Microtubule release within the cell body of neurons may be required for their transport into neuronal processes by microtubule-dependent motor proteins. This transport is required for axonal growth. This is Katanin p60 ATPase-containing subunit A1 (Katna1) from Mus musculus (Mouse).